The chain runs to 188 residues: MASSDCEGHAGQEGETFLYFAYGSNLLTERIHLRNPSAVFCCVARLQDFKLDFGNFQGKMSERWHGGIATIFQSPGDEVWGVVWRMNKSNISSLDEQEGVKSGVYVVIEIKVSTREGKEITCRSYLMTNYESAPPSPQYKKVICMGAKENGLPQEYQEKLKAIEPNEYKGKISDEMEDIIKKGESKLS.

Y19–Y22 provides a ligand contact to substrate. E98 serves as the catalytic Proton acceptor. S173 carries the post-translational modification Phosphoserine.

Belongs to the gamma-glutamylcyclotransferase family. Homodimer.

It catalyses the reaction an alpha-(gamma-L-glutamyl)-L-amino acid = 5-oxo-L-proline + an L-alpha-amino acid. Functionally, catalyzes the formation of 5-oxoproline from gamma-glutamyl dipeptides and may play a significant role in glutathione homeostasis. Induces release of cytochrome c from mitochondria with resultant induction of apoptosis. This is Gamma-glutamylcyclotransferase (Ggct) from Mus musculus (Mouse).